Here is a 121-residue protein sequence, read N- to C-terminus: Prismalin-14 (121 aa).

The first 16 residues, methionine 1–alanine 16, serve as a signal peptide directing secretion. The residue at position 17 (glutamine 17) is a Pyrrolidone carboxylic acid. Tandem repeats lie at residues proline 48 to arginine 51, proline 52 to arginine 55, proline 56 to tyrosine 59, and proline 60 to isoleucine 63. The segment at proline 48 to isoleucine 63 is 4 X 4 AA approximate tandem repeats of P-I-Y-R.

In terms of tissue distribution, expressed only at the mantle edge where it is found predominantly in the inner side of the outer mantle fold.

Its function is as follows. Displays inhibitory activity against calcium carbonate precipitation, binds calcium and affects crystallization of calcium carbonate in vitro. May be involved in calcification of the prismatic layer of the shell. The protein is Prismalin-14 of Pinctada fucata (Akoya pearl oyster).